A 186-amino-acid chain; its full sequence is Elongation factor P (186 aa).

Belongs to the elongation factor P family.

The protein resides in the cytoplasm. The protein operates within protein biosynthesis; polypeptide chain elongation. In terms of biological role, involved in peptide bond synthesis. Stimulates efficient translation and peptide-bond synthesis on native or reconstituted 70S ribosomes in vitro. Probably functions indirectly by altering the affinity of the ribosome for aminoacyl-tRNA, thus increasing their reactivity as acceptors for peptidyl transferase. This is Elongation factor P from Thiobacillus denitrificans (strain ATCC 25259 / T1).